The sequence spans 411 residues: MTEKELIESGNMKMEWARNHMPVLAIIREKFEKEKPLKGLKVGMALHVEAKTAVLVETLAAGGAQVAISGCNPLSTQDDVAAALDTRENINCFAKYGCCTGEYYEAIDRVLDIEPDITIDDGADLIFKLHKERQEMLAKILGGCEETTTGVHRLHAMEKDGALKMPVIAVNDAMTKYLFDNRYGTGQSAWDGINRTTNLLVAGKNVVVAGYGWCGRGVAMRATGLGASVIVTEIDPIRALEARMDGHRVMKMSEAAKIGDLFVTATGNRDILTADNFKVMKDGAILANSGHFNVEIDMEALDSLAKSTRTVRHNIKEYDIGNRRINVIAEGRLVNLAAGDGHPAEVMDMSFANQALCVRYIAENKLSSGVHGVPRELDTYVAKLKLESMGIATDELTSKQECYMSGWECGT.

Substrate-binding residues include D121 and E146. 147–149 (TTT) contributes to the NAD(+) binding site. The substrate site is built by K176 and D180. Residues N181, 210–215 (GYGWCG), E233, N268, 289–291 (SGH), and N335 contribute to the NAD(+) site.

It belongs to the adenosylhomocysteinase family. NAD(+) is required as a cofactor.

It is found in the cytoplasm. It carries out the reaction S-inosyl-L-homocysteine + H2O = L-homocysteine + inosine. It functions in the pathway amino-acid biosynthesis; S-adenosyl-L-methionine biosynthesis. Its function is as follows. Catalyzes the hydrolysis of S-inosyl-L-homocysteine (SIH) to L-homocysteine (Hcy) and inosine. Likely functions in a S-adenosyl-L-methionine (SAM) recycling pathway from S-adenosyl-L-homocysteine (SAH) produced from SAM-dependent methylation reactions. Can also catalyze the reverse reaction in vitro, i.e. the synthesis of SIH from Hcy and inosine. The protein is S-inosyl-L-homocysteine hydrolase of Methanosarcina mazei (strain ATCC BAA-159 / DSM 3647 / Goe1 / Go1 / JCM 11833 / OCM 88) (Methanosarcina frisia).